The chain runs to 187 residues: UPF0301 protein YqgE (187 aa).

Belongs to the UPF0301 (AlgH) family.

The polypeptide is UPF0301 protein YqgE (Escherichia coli O139:H28 (strain E24377A / ETEC)).